A 177-amino-acid chain; its full sequence is FMRFamide-like neuropeptides 7 (177 aa).

The signal sequence occupies residues 1–19 (MLGSRFLLLALGLLVLVLA). Positions 20 to 49 (EESAEQQVQEPTELEKSGEQLSEEDLIDEQ) are excised as a propeptide. Positions 25–106 (QQVQEPTELE…RSSMVRFGKR (82 aa)) are disordered. 6 positions are modified to phenylalanine amide: phenylalanine 62, phenylalanine 75, phenylalanine 89, phenylalanine 103, phenylalanine 117, and phenylalanine 130. Leucine 143 bears the Leucine amide mark. The residue at position 157 (phenylalanine 157) is a Phenylalanine amide. Residues 161–177 (SMEFEMQSNEKNIEDSE) constitute a propeptide that is removed on maturation.

This sequence belongs to the FARP (FMRFamide related peptide) family. As to expression, expressed in the ASI sensory neurons, the ALA interneuron and the AVG interneuron from where secretion occurs. Expression in the ASI neurons is necessary and sufficient to maintain serotonin-induced fat loss.

It localises to the secreted. In terms of biological role, FMRFamide-like neuropeptides. Stimulates serotonin-induced fat loss by binding to and activating the npr-22 receptor which leads to induction of the atgl-1 lipase and subsequent fat loss. Together with atfs-1, negatively regulates the expression of the transcription regulator hlh-11, to promote expression of atgl-1, and thus atgl-1-dependent fat oxidation in response to mitochondrial stress. Its function is as follows. TPMQRSSMVRF-amide: Acts as a ligand for the npr-22 receptor in vitro. SPMQRSSMVRF-amide: Acts as a ligand for the npr-22 receptor in vitro. Functionally, acts as a ligand for the npr-22 receptor in vitro. The sequence is that of FMRFamide-like neuropeptides 7 from Caenorhabditis elegans.